The sequence spans 564 residues: Potassium-transporting ATPase potassium-binding subunit (564 aa).

10 consecutive transmembrane segments (helical) span residues 4-24, 67-87, 135-155, 179-199, 254-274, 286-306, 382-402, 420-440, 487-507, and 528-548; these read YDYWLIIAFFAVVLVPAPFLG, MLALLAFNLAGFLLLFAILLF, AGLTVQNFVSAATGLAVLVAL, LYGLLPLCLVLALFLVWQGVP, WANLFELAAIILIPVALVFTF, AILGCMLALFLIGGATSLWAE, AGMYGMLLNVLIAVFLAGLMI, LLVVTLLVMPVGVLVLGAIAA, LMLGLGMLIGRFGYILPVLAL, and GPLFVTLLTVTILLVGGLTFL.

Belongs to the KdpA family. As to quaternary structure, the system is composed of three essential subunits: KdpA, KdpB and KdpC.

The protein localises to the cell inner membrane. Functionally, part of the high-affinity ATP-driven potassium transport (or Kdp) system, which catalyzes the hydrolysis of ATP coupled with the electrogenic transport of potassium into the cytoplasm. This subunit binds the periplasmic potassium ions and delivers the ions to the membrane domain of KdpB through an intramembrane tunnel. This Pseudomonas fluorescens (strain SBW25) protein is Potassium-transporting ATPase potassium-binding subunit.